Here is a 148-residue protein sequence, read N- to C-terminus: Caltractin (148 aa).

EF-hand domains lie at 4 to 39, 40 to 75, 77 to 112, and 113 to 148; these read EQKQEXREAFDLFDTDGSGTIDAKELKVXMXALGFE, PKKEEIQKMISDIDKDGSGTIDFEEFLQMMTAKMGE, DSREEIMKAFRLFDDDQTGKITFKNLKRVAKELGEN, and LTDEEIQEMIDEADRDGDGEINEEEFFRIMKKTSLF. Positions 17, 19, 21, 23, 28, 53, 55, 57, 59, and 64 each coordinate Ca(2+). Ca(2+) contacts are provided by Asp126, Asp128, Asp130, Glu132, and Glu137.

This sequence belongs to the centrin family. In terms of tissue distribution, ubiquitous.

Its function is as follows. This calcium-binding protein is found in the basal body complexes (the functional homolog of the centrosome in animal cell). In mitotic cells it is specifically associated with the poles of the mitotic spindles at the sites of the duplicated basal body complexes. This chain is Caltractin, found in Spermatozopsis similis (Green alga).